The following is a 512-amino-acid chain: Cytochrome P450 1A2 (512 aa).

Ser65 carries an O-linked (GlcNAc) serine glycan. Phe222 lines the substrate pocket. Cys454 lines the heme pocket.

The protein belongs to the cytochrome P450 family. In terms of assembly, interacts with PGRMC1; the interaction requires PGRMC1 homodimerization. Heme serves as cofactor. Constitutively expressed in liver.

The protein resides in the endoplasmic reticulum membrane. It is found in the microsome membrane. The catalysed reaction is an organic molecule + reduced [NADPH--hemoprotein reductase] + O2 = an alcohol + oxidized [NADPH--hemoprotein reductase] + H2O + H(+). The enzyme catalyses 17beta-estradiol + reduced [NADPH--hemoprotein reductase] + O2 = 2-hydroxy-17beta-estradiol + oxidized [NADPH--hemoprotein reductase] + H2O + H(+). It catalyses the reaction 17beta-estradiol + reduced [NADPH--hemoprotein reductase] + O2 = 4-hydroxy-17beta-estradiol + oxidized [NADPH--hemoprotein reductase] + H2O + H(+). It carries out the reaction estrone + reduced [NADPH--hemoprotein reductase] + O2 = 2-hydroxyestrone + oxidized [NADPH--hemoprotein reductase] + H2O + H(+). The catalysed reaction is estrone + reduced [NADPH--hemoprotein reductase] + O2 = 4-hydroxyestrone + oxidized [NADPH--hemoprotein reductase] + H2O + H(+). The enzyme catalyses cholesterol + reduced [NADPH--hemoprotein reductase] + O2 = 25-hydroxycholesterol + oxidized [NADPH--hemoprotein reductase] + H2O + H(+). It catalyses the reaction all-trans-retinol + reduced [NADPH--hemoprotein reductase] + O2 = all-trans-retinal + oxidized [NADPH--hemoprotein reductase] + 2 H2O + H(+). It carries out the reaction all-trans-retinal + reduced [NADPH--hemoprotein reductase] + O2 = all-trans-retinoate + oxidized [NADPH--hemoprotein reductase] + H2O + 2 H(+). The catalysed reaction is (5Z,8Z,11Z,14Z)-eicosatetraenoate + reduced [NADPH--hemoprotein reductase] + O2 = (14R,15S)-epoxy-(5Z,8Z,11Z)-eicosatrienoate + oxidized [NADPH--hemoprotein reductase] + H2O + H(+). The enzyme catalyses (5Z,8Z,11Z,14Z)-eicosatetraenoate + reduced [NADPH--hemoprotein reductase] + O2 = (14S,15R)-epoxy-(5Z,8Z,11Z)-eicosatrienoate + oxidized [NADPH--hemoprotein reductase] + H2O + H(+). It catalyses the reaction (5Z,8Z,11Z,14Z,17Z)-eicosapentaenoate + reduced [NADPH--hemoprotein reductase] + O2 = (17R,18S)-epoxy-(5Z,8Z,11Z,14Z)-eicosatetraenoate + oxidized [NADPH--hemoprotein reductase] + H2O + H(+). It carries out the reaction (4Z,7Z,10Z,13Z,16Z,19Z)-docosahexaenoate + reduced [NADPH--hemoprotein reductase] + O2 = (19R,20S)-epoxy-(4Z,7Z,10Z,13Z,16Z)-docosapentaenoate + oxidized [NADPH--hemoprotein reductase] + H2O + H(+). The catalysed reaction is (5S)-hydroperoxy-(6E,8Z,11Z,14Z)-eicosatetraenoate = 5-oxo-(6E,8Z,11Z,14Z)-eicosatetraenoate + H2O. The enzyme catalyses (12S)-hydroperoxy-(5Z,8Z,10E,14Z)-eicosatetraenoate = 12-oxo-(5Z,8Z,10E,14Z)-eicosatetraenoate + H2O. It catalyses the reaction (15S)-hydroperoxy-(5Z,8Z,11Z,13E)-eicosatetraenoate = 15-oxo-(5Z,8Z,11Z,13E)-eicosatetraenoate + H2O. It carries out the reaction (13S)-hydroperoxy-(9Z,11E)-octadecadienoate = 13-oxo-(9Z,11E)-octadecadienoate + H2O. The catalysed reaction is (5Z,8Z,11Z,14Z)-eicosatetraenoate + reduced [NADPH--hemoprotein reductase] + O2 = 13-hydroxy-(5Z,8Z,11Z,14Z)-eicosatetraenoate + oxidized [NADPH--hemoprotein reductase] + H2O + H(+). The enzyme catalyses (5Z,8Z,11Z,14Z)-eicosatetraenoate + reduced [NADPH--hemoprotein reductase] + O2 = 19-hydroxy-(5Z,8Z,11Z,14Z)-eicosatetraenoate + oxidized [NADPH--hemoprotein reductase] + H2O + H(+). It catalyses the reaction (9Z,12Z)-octadecadienoate + reduced [NADPH--hemoprotein reductase] + O2 = 11-hydroxy-(9Z,12Z)-octadecadienoate + oxidized [NADPH--hemoprotein reductase] + H2O + H(+). The protein operates within cofactor metabolism; retinol metabolism. It functions in the pathway steroid metabolism; cholesterol metabolism. It participates in lipid metabolism; arachidonate metabolism. In terms of biological role, a cytochrome P450 monooxygenase involved in the metabolism of various endogenous substrates, including fatty acids, steroid hormones and vitamins. Mechanistically, uses molecular oxygen inserting one oxygen atom into a substrate, and reducing the second into a water molecule, with two electrons provided by NADPH via cytochrome P450 reductase (NADPH--hemoprotein reductase). Catalyzes the hydroxylation of carbon-hydrogen bonds. Exhibits high catalytic activity for the formation of hydroxyestrogens from estrone (E1) and 17beta-estradiol (E2), namely 2-hydroxy E1 and E2. Metabolizes cholesterol toward 25-hydroxycholesterol, a physiological regulator of cellular cholesterol homeostasis. May act as a major enzyme for all-trans retinoic acid biosynthesis in the liver. Catalyzes two successive oxidative transformation of all-trans retinol to all-trans retinal and then to the active form all-trans retinoic acid. Primarily catalyzes stereoselective epoxidation of the last double bond of polyunsaturated fatty acids (PUFA), displaying a strong preference for the (R,S) stereoisomer. Catalyzes bisallylic hydroxylation and omega-1 hydroxylation of PUFA. May also participate in eicosanoids metabolism by converting hydroperoxide species into oxo metabolites (lipoxygenase-like reaction, NADPH-independent). Plays a role in the oxidative metabolism of xenobiotics. Catalyzes the N-hydroxylation of heterocyclic amines and the O-deethylation of phenacetin. Metabolizes caffeine via N3-demethylation. The sequence is that of Cytochrome P450 1A2 (CYP1A2) from Canis lupus familiaris (Dog).